A 271-amino-acid polypeptide reads, in one-letter code: Phosphate import ATP-binding protein PstB (271 aa).

The ABC transporter domain occupies 24–266 (MIGKDVSVYY…PDDQRTQDYI (243 aa)). 56 to 63 (GPSGCGKS) contributes to the ATP binding site.

Belongs to the ABC transporter superfamily. Phosphate importer (TC 3.A.1.7) family. As to quaternary structure, the complex is composed of two ATP-binding proteins (PstB), two transmembrane proteins (PstC and PstA) and a solute-binding protein (PstS).

Its subcellular location is the cell inner membrane. The catalysed reaction is phosphate(out) + ATP + H2O = ADP + 2 phosphate(in) + H(+). Its function is as follows. Part of the ABC transporter complex PstSACB involved in phosphate import. Responsible for energy coupling to the transport system. The sequence is that of Phosphate import ATP-binding protein PstB from Agrobacterium fabrum (strain C58 / ATCC 33970) (Agrobacterium tumefaciens (strain C58)).